A 413-amino-acid chain; its full sequence is Wilms tumor protein homolog (413 aa).

Residues Lys56 and Lys159 each participate in a glycyl lysine isopeptide (Lys-Gly) (interchain with G-Cter in SUMO) cross-link. The short motif at 218 to 226 is the 9aaTAD element; the sequence is MTWNQMNLG. C2H2-type zinc fingers lie at residues 290 to 314, 320 to 344, 350 to 372, and 378 to 402; these read FMCAYPGCNKRYFKLSHLQMHSRKH, YQCDFKDCERRFSRSDQLKRHQRRH, FQCKTCQRKFSRSDHLKTHTRTH, and FSCRWPSCQKKFARSDELVRHHNMH. Important for interaction with target DNA regions lie at residues 334–348 and 360–368; these read SDQLKRHQRRHTGIK and SRSDHLKTH.

This sequence belongs to the EGR C2H2-type zinc-finger protein family.

It is found in the nucleus. Its subcellular location is the cytoplasm. The protein localises to the nucleus speckle. Functionally, transcription factor required for development of the vascular component of the pronephric kidney, the glomus; may repress tubule-specific gene expression in the portion of the pronephros fated to form the glomus. Recognizes and binds to the DNA sequence 5'-GCG(T/G)GGGCG-3'. Inhibits Wnt-signaling during embryonic development. This is Wilms tumor protein homolog (wt1) from Xenopus tropicalis (Western clawed frog).